A 378-amino-acid chain; its full sequence is Transmembrane 6 superfamily member 2 (378 aa).

Helical transmembrane passes span Thr-10–Phe-30, Leu-34–Leu-54, Pro-63–Leu-83, Ile-110–Ala-130, Leu-140–Ile-160, Pro-170–Phe-190, Leu-219–Val-239, Met-269–Phe-289, Gly-291–Phe-311, and Thr-332–Phe-352. EXPERA domains follow at residues Tyr-61–Gly-186 and Ala-217–Ala-351.

The protein belongs to the TM6SF family. As to expression, highly expressed in the liver at both the mRNA and protein levels.

It localises to the endoplasmic reticulum membrane. The protein resides in the endoplasmic reticulum-Golgi intermediate compartment membrane. In terms of biological role, regulator of liver fat metabolism influencing triglyceride secretion and hepatic lipid droplet content. May function as sterol isomerase. This chain is Transmembrane 6 superfamily member 2 (Tm6sf2), found in Mus musculus (Mouse).